Consider the following 822-residue polypeptide: Serine/threonine-protein kinase kin-29 (822 aa).

Residues 16–267 (YDVGRAIGKG…IQNVLQHRWM (252 aa)) enclose the Protein kinase domain. ATP is bound by residues 22–30 (IGKGNFATV) and lysine 45. Catalysis depends on aspartate 138, which acts as the Proton acceptor. Disordered regions lie at residues 348 to 367 (EGTG…LSGK), 389 to 423 (LSSP…RQFG), and 577 to 602 (NPIP…WASP). Residues 394–406 (CDSDDSSNSDLCD) show a composition bias toward acidic residues.

This sequence belongs to the protein kinase superfamily. CAMK Ser/Thr protein kinase family. SNF1 subfamily. As to quaternary structure, interacts with tax-6. Requires Mg(2+) as cofactor. Post-translationally, autophosphorylated. Elevated cAMP levels appears to act via PKA to directly or indirectly phosphorylate multiple sites on kin-29 and inhibit function. In terms of tissue distribution, primarily neuronal, with additional expression in body wall muscle and hypodermal cells. Among neuronal cells, expressed in multiple sensory neurons and interneurons in the lateral, anterior, and lumbar ganglia, as well as in motor neurons in the ventral motor cord. Present in the AWB and AWC olfactory neurons.

It localises to the cytoplasm. The protein resides in the nucleus. It catalyses the reaction L-seryl-[protein] + ATP = O-phospho-L-seryl-[protein] + ADP + H(+). The catalysed reaction is L-threonyl-[protein] + ATP = O-phospho-L-threonyl-[protein] + ADP + H(+). Functionally, regulates chemoreceptor expression by phosphorylating the hda-4 class II histone deacetylase (HDAC) and inhibiting the gene repression functions of hda-4 and the mef-2 transcription factor, enabling the correct sensing and transduction of food signals. Role in determining body size, the dauer decision and serotonin-mediated egg laying. May modulate the Sma/Mab pathway and regulates development in the later larval stages. The protein is Serine/threonine-protein kinase kin-29 of Caenorhabditis elegans.